Reading from the N-terminus, the 446-residue chain is Alpha-1,6-mannosyl-glycoprotein 2-beta-N-acetylglucosaminyltransferase (446 aa).

Residues 1 to 9 (MRFRIYKRK) are Cytoplasmic-facing. A helical; Signal-anchor for type II membrane protein membrane pass occupies residues 10–29 (VLILTFVVAACGFVLWSSNG). Topologically, residues 30–446 (RQRKNEALAP…ELCKSYRRLQ (417 aa)) are lumenal. N-linked (GlcNAc...) asparagine glycans are attached at residues Asn69 and Asn86. Substrate contacts are provided by residues 123–127 (QVHNR) and Asp154. A disulfide bridge connects residues Cys196 and Cys210. 229-233 (QTKHH) is a substrate binding site. Asp261 is a binding site for Mn(2+). Cys283 and Cys286 are disulfide-bonded. Substrate is bound at residue Arg298. 3 disulfide bridges follow: Cys334–Cys357, Cys339–Cys439, and Cys378–Cys386. His374 is a binding site for Mn(2+).

This sequence belongs to the glycosyltransferase 16 (GT16) protein family. As to quaternary structure, homodimer. It depends on Mn(2+) as a cofactor.

The protein localises to the golgi apparatus membrane. The enzyme catalyses an N(4)-{beta-D-GlcNAc-(1-&gt;2)-alpha-D-Man-(1-&gt;3)-[alpha-D-Man-(1-&gt;6)]-beta-D-Man-(1-&gt;4)-beta-D-GlcNAc-(1-&gt;4)-beta-D-GlcNAc}-L-asparaginyl-[protein] + UDP-N-acetyl-alpha-D-glucosamine = N(4)-{beta-D-GlcNAc-(1-&gt;2)-alpha-D-Man-(1-&gt;3)-[beta-D-GlcNAc-(1-&gt;2)-alpha-D-Man-(1-&gt;6)]-beta-D-Man-(1-&gt;4)-beta-D-GlcNAc-(1-&gt;4)-beta-D-GlcNAc}-L-asparaginyl-[protein] + UDP + H(+). It functions in the pathway protein modification; protein glycosylation. Functionally, plays an essential role in protein N-glycosylation. Catalyzes the transfer of N-acetylglucosamine (GlcNAc) onto the free terminal mannose moiety in the core structure of the nascent N-linked glycan chain, giving rise to the second branch in complex glycans. In Sus scrofa (Pig), this protein is Alpha-1,6-mannosyl-glycoprotein 2-beta-N-acetylglucosaminyltransferase (MGAT2).